Consider the following 125-residue polypeptide: Small ribosomal subunit protein uS13 (125 aa).

The segment at 93–125 (RKGLPVRGQRTKTNARTRKGPKRTVAGKKKAGR) is disordered.

Belongs to the universal ribosomal protein uS13 family. Part of the 30S ribosomal subunit. Forms a loose heterodimer with protein S19. Forms two bridges to the 50S subunit in the 70S ribosome.

Located at the top of the head of the 30S subunit, it contacts several helices of the 16S rRNA. In the 70S ribosome it contacts the 23S rRNA (bridge B1a) and protein L5 of the 50S subunit (bridge B1b), connecting the 2 subunits; these bridges are implicated in subunit movement. Contacts the tRNAs in the A and P-sites. This is Small ribosomal subunit protein uS13 from Arthrobacter sp. (strain FB24).